Consider the following 404-residue polypeptide: Ubiquitin-like modifier-activating enzyme 5 (404 aa).

The residue at position 45 (Ser-45) is a Phosphoserine. The ATP site is built by Gly-83, Asp-104, Lys-127, Asn-150, and Asn-184. Cys-226 and Cys-229 together coordinate Zn(2+). Cys-250 acts as the Glycyl thioester intermediate in catalysis. Cys-303 and Cys-308 together coordinate Zn(2+). The UFM1-interacting sequence (UIS) signature appears at 334 to 346; that stretch reads IIHEDNEWGIELV. Residues 347 to 377 are linker; the sequence is SEVSEEELKNSSGPVPDLPEGITVAYTIPKK. 2 positions are modified to phosphoserine: Ser-358 and Ser-393. The UFC1-binding sequence (UFC) signature appears at 389-404; the sequence is DSGESLEDLMAKMKNM.

Belongs to the ubiquitin-activating E1 family. UBA5 subfamily. As to quaternary structure, homodimer; homodimerization is required for UFM1 activation. Interacts (via UIS motif) with UFM1; binds UFM1 via a trans-binding mechanism in which UFM1 interacts with distinct sites in both subunits of the UBA5 homodimer. Interacts (via C-terminus) with UFC1. Interacts (via UIS motif) with GABARAPL2 and, with lower affinity, with GABARAP and GABARAPL1.

It localises to the cytoplasm. It is found in the nucleus. The protein localises to the endoplasmic reticulum membrane. Its subcellular location is the golgi apparatus. Its function is as follows. E1-like enzyme which specifically catalyzes the first step in ufmylation. Activates UFM1 by first adenylating its C-terminal glycine residue with ATP, and thereafter linking this residue to the side chain of a cysteine residue in E1, yielding a UFM1-E1 thioester and free AMP. Activates UFM1 via a trans-binding mechanism, in which UFM1 interacts with distinct sites in both subunits of the UBA5 homodimer. Trans-binding also promotes stabilization of the UBA5 homodimer, and enhances ATP-binding. Transfer of UFM1 from UBA5 to the E2-like enzyme UFC1 also takes place using a trans mechanism. Ufmylation plays a key role in various processes, such as ribosome recycling, response to DNA damage, interferon response or reticulophagy (also called ER-phagy). Ufmylation is essential for erythroid differentiation of both megakaryocytes and erythrocytes. This chain is Ubiquitin-like modifier-activating enzyme 5, found in Pongo abelii (Sumatran orangutan).